The primary structure comprises 1155 residues: DNA-directed RNA polymerase subunit beta (1155 aa).

This sequence belongs to the RNA polymerase beta chain family. In terms of assembly, the RNAP catalytic core consists of 2 alpha, 1 beta, 1 beta' and 1 omega subunit. When a sigma factor is associated with the core the holoenzyme is formed, which can initiate transcription.

The catalysed reaction is RNA(n) + a ribonucleoside 5'-triphosphate = RNA(n+1) + diphosphate. Functionally, DNA-dependent RNA polymerase catalyzes the transcription of DNA into RNA using the four ribonucleoside triphosphates as substrates. This chain is DNA-directed RNA polymerase subunit beta, found in Borrelia recurrentis (strain A1).